A 177-amino-acid polypeptide reads, in one-letter code: ECF RNA polymerase sigma factor SigL (177 aa).

Positions 18-85 (LYDEHAAVLW…MIIDERRSAR (68 aa)) are sigma-70 factor domain-2. An Interaction with polymerase core subunit RpoC motif is present at residues 42–45 (DVVQ). A sigma-70 factor domain-4 region spans residues 119 to 167 (ALAQLSAEHRAVIQRSYYRGWSTAQIATDLGIAEGTVKSRLHYAVRALR). The segment at residues 141 to 160 (TAQIATDLGIAEGTVKSRLH) is a DNA-binding region (H-T-H motif).

This sequence belongs to the sigma-70 factor family. ECF subfamily. As to quaternary structure, interacts transiently with the RNA polymerase catalytic core formed by RpoA, RpoB, RpoC and RpoZ (2 alpha, 1 beta, 1 beta' and 1 omega subunit) to form the RNA polymerase holoenzyme that can initiate transcription. Interacts (via sigma-70 factor domain 4) with anti-sigma-L factor RslA.

Its function is as follows. Sigma factors are initiation factors that promote the attachment of RNA polymerase to specific initiation sites and are then released. Extracytoplasmic function (ECF) sigma factors are held in an inactive form by an anti-sigma factor until released by regulated intramembrane proteolysis. In Mycobacterium tuberculosis (strain ATCC 35801 / TMC 107 / Erdman), this protein is ECF RNA polymerase sigma factor SigL (sigL).